We begin with the raw amino-acid sequence, 120 residues long: Glycine cleavage system H protein (120 aa).

The Lipoyl-binding domain maps to Ile-17–Lys-99. Lys-58 carries the post-translational modification N6-lipoyllysine.

This sequence belongs to the GcvH family. In terms of assembly, the glycine cleavage system is composed of four proteins: P, T, L and H. (R)-lipoate is required as a cofactor.

Its function is as follows. The glycine cleavage system catalyzes the degradation of glycine. The H protein shuttles the methylamine group of glycine from the P protein to the T protein. The protein is Glycine cleavage system H protein of Allorhizobium ampelinum (strain ATCC BAA-846 / DSM 112012 / S4) (Agrobacterium vitis (strain S4)).